Consider the following 123-residue polypeptide: Holo-[acyl-carrier-protein] synthase (123 aa).

Residues D8 and E60 each coordinate Mg(2+).

The protein belongs to the P-Pant transferase superfamily. AcpS family. Mg(2+) is required as a cofactor.

It localises to the cytoplasm. It catalyses the reaction apo-[ACP] + CoA = holo-[ACP] + adenosine 3',5'-bisphosphate + H(+). Its function is as follows. Transfers the 4'-phosphopantetheine moiety from coenzyme A to a Ser of acyl-carrier-protein. The chain is Holo-[acyl-carrier-protein] synthase from Ehrlichia ruminantium (strain Welgevonden).